The chain runs to 459 residues: Ribulose bisphosphate carboxylase large chain (459 aa).

A propeptide spanning residues 1–2 is cleaved from the precursor; the sequence is MS. N-acetylproline is present on proline 3. N6,N6,N6-trimethyllysine is present on lysine 14. Positions 123 and 173 each coordinate substrate. The active-site Proton acceptor is the lysine 175. Lysine 177 is a substrate binding site. Residues lysine 201, aspartate 203, and glutamate 204 each contribute to the Mg(2+) site. An N6-carboxylysine modification is found at lysine 201. Histidine 294 serves as the catalytic Proton acceptor. Substrate contacts are provided by arginine 295, histidine 327, and serine 379.

Belongs to the RuBisCO large chain family. Type I subfamily. In terms of assembly, heterohexadecamer of 8 large chains and 8 small chains; disulfide-linked. The disulfide link is formed within the large subunit homodimers. It depends on Mg(2+) as a cofactor. The disulfide bond which can form in the large chain dimeric partners within the hexadecamer appears to be associated with oxidative stress and protein turnover.

Its subcellular location is the plastid. The protein resides in the chloroplast. It catalyses the reaction 2 (2R)-3-phosphoglycerate + 2 H(+) = D-ribulose 1,5-bisphosphate + CO2 + H2O. The catalysed reaction is D-ribulose 1,5-bisphosphate + O2 = 2-phosphoglycolate + (2R)-3-phosphoglycerate + 2 H(+). Functionally, ruBisCO catalyzes two reactions: the carboxylation of D-ribulose 1,5-bisphosphate, the primary event in carbon dioxide fixation, as well as the oxidative fragmentation of the pentose substrate in the photorespiration process. Both reactions occur simultaneously and in competition at the same active site. The protein is Ribulose bisphosphate carboxylase large chain of Streptopus lanceolatus (Rose twisted stalk).